The sequence spans 354 residues: NADH-quinone oxidoreductase subunit H (354 aa).

The next 8 membrane-spanning stretches (helical) occupy residues 25-45 (LVRI…LILW), 91-111 (WLYL…WAVI), 126-146 (LLYA…AGWA), 170-190 (MGFA…SEIV), 205-225 (FLSW…ISGI), 253-273 (MAFA…SALA), 290-310 (FIPG…VFIW), and 330-350 (VFLP…MSPL).

Belongs to the complex I subunit 1 family. NDH-1 is composed of 14 different subunits. Subunits NuoA, H, J, K, L, M, N constitute the membrane sector of the complex.

It is found in the cell inner membrane. It catalyses the reaction a quinone + NADH + 5 H(+)(in) = a quinol + NAD(+) + 4 H(+)(out). In terms of biological role, NDH-1 shuttles electrons from NADH, via FMN and iron-sulfur (Fe-S) centers, to quinones in the respiratory chain. The immediate electron acceptor for the enzyme in this species is believed to be ubiquinone. Couples the redox reaction to proton translocation (for every two electrons transferred, four hydrogen ions are translocated across the cytoplasmic membrane), and thus conserves the redox energy in a proton gradient. This subunit may bind ubiquinone. The chain is NADH-quinone oxidoreductase subunit H from Burkholderia thailandensis (strain ATCC 700388 / DSM 13276 / CCUG 48851 / CIP 106301 / E264).